Here is a 705-residue protein sequence, read N- to C-terminus: Tryptophan synthase (705 aa).

Residues 1–293 (MEAIKKVFEQ…QLTPNAETAK (293 aa)) form a tryptophan synthase alpha chain region. Residues E49 and D60 each act as proton acceptor in the active site. Residues 266–287 (KGEPSRVRSPGAAQRTPSQLTP) form a disordered region. Residues 294–705 (GVENILPARF…HVSSNAIPSK (412 aa)) are tryptophan synthase beta chain. Residue K381 is modified to N6-(pyridoxal phosphate)lysine.

This sequence in the N-terminal section; belongs to the TrpA family. It in the C-terminal section; belongs to the TrpB family. Requires pyridoxal 5'-phosphate as cofactor.

The catalysed reaction is (1S,2R)-1-C-(indol-3-yl)glycerol 3-phosphate + L-serine = D-glyceraldehyde 3-phosphate + L-tryptophan + H2O. It functions in the pathway amino-acid biosynthesis; L-tryptophan biosynthesis; L-tryptophan from chorismate: step 5/5. The chain is Tryptophan synthase (TRP-1) from Coprinopsis cinerea (Inky cap fungus).